The primary structure comprises 602 residues: GTP-binding protein 2 (602 aa).

Positions 18 to 64 (GPAMGGNLKARGAGGSSSCGGPKGKKKNGRNRGGKANNPPYLPPEAE) are disordered. The span at 29–39 (GAGGSSSCGGP) shows a compositional bias: gly residues. Over residues 40–50 (KGKKKNGRNRG) the composition is skewed to basic residues. Positions 170 to 398 (FLDLRVAVLG…LNILPPLTNS (229 aa)) constitute a tr-type G domain. GTP-binding positions include 179 to 186 (GNVDSGKS), 260 to 264 (DLAGH), and 316 to 319 (SKVD).

This sequence belongs to the TRAFAC class translation factor GTPase superfamily. Classic translation factor GTPase family. GTPBP1 subfamily. Predominantly expressed in thymus, spleen, and testis. Expressed at lower levels in brain, heart, lung, kidney, and skeletal muscle. In testis, specifically expressed in spermatocytes and round spermatids.

This chain is GTP-binding protein 2, found in Mus musculus (Mouse).